Reading from the N-terminus, the 230-residue chain is Geranylgeranylglyceryl phosphate synthase (230 aa).

Lys13 contacts sn-glycerol 1-phosphate. Residues Asp15 and Thr41 each coordinate Mg(2+). Residues 161 to 166, Gly191, and 211 to 212 each bind sn-glycerol 1-phosphate; these read YIEYSG and GN.

The protein belongs to the GGGP/HepGP synthase family. Group I subfamily. Mg(2+) is required as a cofactor.

It localises to the cytoplasm. It catalyses the reaction sn-glycerol 1-phosphate + (2E,6E,10E)-geranylgeranyl diphosphate = sn-3-O-(geranylgeranyl)glycerol 1-phosphate + diphosphate. It functions in the pathway membrane lipid metabolism; glycerophospholipid metabolism. Functionally, prenyltransferase that catalyzes the transfer of the geranylgeranyl moiety of geranylgeranyl diphosphate (GGPP) to the C3 hydroxyl of sn-glycerol-1-phosphate (G1P). This reaction is the first ether-bond-formation step in the biosynthesis of archaeal membrane lipids. The protein is Geranylgeranylglyceryl phosphate synthase of Methanoculleus marisnigri (strain ATCC 35101 / DSM 1498 / JR1).